The sequence spans 104 residues: Ubiquitin-related modifier 1 homolog (104 aa).

Position 104 is a 1-thioglycine (G104). A Glycyl lysine isopeptide (Gly-Lys) (interchain with K-? in acceptor proteins) cross-link involves residue G104.

It belongs to the URM1 family. In terms of assembly, interacts with cer. In terms of processing, C-terminal thiocarboxylation occurs in 2 steps, it is first acyl-adenylated (-COAMP) via the hesA/moeB/thiF part of the MOCS3 homolog, then thiocarboxylated (-COSH) via the rhodanese domain of the MOCS3 homolog.

Its subcellular location is the cytoplasm. It participates in tRNA modification; 5-methoxycarbonylmethyl-2-thiouridine-tRNA biosynthesis. Acts as a sulfur carrier required for 2-thiolation of mcm(5)S(2)U at tRNA wobble positions of cytosolic tRNA(Lys), tRNA(Glu) and tRNA(Gln). Serves as sulfur donor in tRNA 2-thiolation reaction by being thiocarboxylated (-COSH) at its C-terminus by MOCS3. The sulfur is then transferred to tRNA to form 2-thiolation of mcm(5)S(2)U. Also acts as a ubiquitin-like protein (UBL) that is covalently conjugated via an isopeptide bond to lysine residues of target proteins such as Prx2/Jafrac1, Ciao1, Eip71CD and GILT1. The thiocarboxylated form serves as substrate for conjugation and oxidative stress specifically induces the formation of UBL-protein conjugates. The chain is Ubiquitin-related modifier 1 homolog from Drosophila grimshawi (Hawaiian fruit fly).